A 171-amino-acid polypeptide reads, in one-letter code: Moubatin (171 aa).

An N-terminal signal peptide occupies residues 1-15 (MMLVLTTLIFSFSAS). 3 disulfide bridges follow: cysteine 23–cysteine 144, cysteine 55–cysteine 166, and cysteine 118–cysteine 145.

This sequence belongs to the calycin superfamily. Lipocalin family. In terms of processing, the N-terminus is blocked. Expressed in salivary glands.

The protein resides in the secreted. Tick salivary platelet aggregation inhibitor that plays an important part in the anti-hemostatic strategy of ticks. Acts by scavenging thromboxane A2 (TXA2), a potent inducer of platelet aggregation and blood vessel constriction. As a consequence, is a specific inhibitor of collagen-induced platelet aggregation. In addition, it also acts as a potent inhibitor of TXA2-mediated vasoconstriction. Has also been found to bind leukotriene B4 (LTB4) (which also derives from arachidonic acid, as TXA2) with affinities in the nanomolar range. It does not interact with complement protein C5. This chain is Moubatin, found in Ornithodoros moubata (Soft tick).